Consider the following 358-residue polypeptide: UDP-N-acetylglucosamine--N-acetylmuramyl-(pentapeptide) pyrophosphoryl-undecaprenol N-acetylglucosamine transferase (358 aa).

UDP-N-acetyl-alpha-D-glucosamine-binding positions include 10-12, N124, S196, and Q293; that span reads TGG.

The protein belongs to the glycosyltransferase 28 family. MurG subfamily.

The protein resides in the cell membrane. It catalyses the reaction di-trans,octa-cis-undecaprenyl diphospho-N-acetyl-alpha-D-muramoyl-L-alanyl-D-glutamyl-meso-2,6-diaminopimeloyl-D-alanyl-D-alanine + UDP-N-acetyl-alpha-D-glucosamine = di-trans,octa-cis-undecaprenyl diphospho-[N-acetyl-alpha-D-glucosaminyl-(1-&gt;4)]-N-acetyl-alpha-D-muramoyl-L-alanyl-D-glutamyl-meso-2,6-diaminopimeloyl-D-alanyl-D-alanine + UDP + H(+). The protein operates within cell wall biogenesis; peptidoglycan biosynthesis. Its function is as follows. Cell wall formation. Catalyzes the transfer of a GlcNAc subunit on undecaprenyl-pyrophosphoryl-MurNAc-pentapeptide (lipid intermediate I) to form undecaprenyl-pyrophosphoryl-MurNAc-(pentapeptide)GlcNAc (lipid intermediate II). The protein is UDP-N-acetylglucosamine--N-acetylmuramyl-(pentapeptide) pyrophosphoryl-undecaprenol N-acetylglucosamine transferase of Exiguobacterium sp. (strain ATCC BAA-1283 / AT1b).